The chain runs to 1257 residues: Period circadian protein homolog 2 (1257 aa).

The interval 1 to 60 (MNGYVDFSPSPTSPTKEPGAPQPTQAVLQEDVDMSSGSSGNENCSTGRDSQGSDCDDNGK) is disordered. Positions 35-53 (SSGSSGNENCSTGRDSQGS) are enriched in polar residues. Positions 109-118 (LIRTLKELKV) match the Nuclear export signal 1 motif. In terms of domain architecture, PAS 1 spans 179–246 (ITSEYIVKNA…FHSYTTPYKL (68 aa)). The LXXLL motif lies at 306–310 (LCCLL). The PAS 2 domain occupies 319–385 (YEAPRIPPEK…MLAIHKKILQ (67 aa)). The 44-residue stretch at 393 to 436 (YSPIRFRTRNGEYITLDTSWSSFINPWSRKISFIIGRHKVRVGP) folds into the PAC domain. The Nuclear export signal 2 motif lies at 460–469 (LTEQIHRLLM). 2 disordered regions span residues 471–565 (PVPH…GASL) and 617–638 (PSRK…PSKV). The interval 478–482 (SGYGS) is important for protein stability. Residues 493–504 (MSQTSSSDSNGQ) show a composition bias toward polar residues. Residues 510-709 (RRSGIFKTSG…GAAGGLSQEK (200 aa)) are CSNK1E binding domain. Phosphoserine is present on residues Ser-525, Ser-528, Ser-531, Ser-538, and Ser-544. Thr-554 carries the post-translational modification Phosphothreonine. Phosphoserine occurs at positions 659, 693, 697, 706, 758, and 763. Residues 757–832 (RSRAQASDRG…SDTSQSSCPS (76 aa)) are disordered. A Nuclear localization signal motif is present at residues 778–794 (KKTGKNRKLKSKRVKTR). Basic residues predominate over residues 779–792 (KTGKNRKLKSKRVK). The segment covering 821–832 (SPSDTSQSSCPS) has biased composition (low complexity). Thr-858 carries the phosphothreonine modification. The interval 882–1067 (EFAVQPLPFA…DLCSATGSAL (186 aa)) is interaction with PPARG. The residue at position 939 (Ser-939) is a Phosphoserine. Phosphothreonine is present on Thr-964. Position 971 is a phosphoserine (Ser-971). Residues 983–990 (LQLNLLQL) carry the Nuclear export signal 3 motif. Residues 994-1044 (PEGSTGAAGTLGTTGTAASGLDCTSGTSRDRQPKAPPTCNEPSDTQNSDAI) form a disordered region. Residues 996–1014 (GSTGAAGTLGTTGTAASGL) show a composition bias toward low complexity. Residues 1033-1044 (NEPSDTQNSDAI) are compositionally biased toward polar residues. An LXXLL motif is present at residues 1051–1055 (LNLLL). Positions 1070 to 1092 (SGASATSDSLGSSSLGFGTSQSG) are enriched in low complexity. The disordered stretch occupies residues 1070 to 1115 (SGASATSDSLGSSSLGFGTSQSGAGSSDTSHTSKYFGSIDSSENNH). Positions 1093–1111 (AGSSDTSHTSKYFGSIDSS) are enriched in polar residues. Ser-1126 carries the post-translational modification Phosphoserine. A CRY binding domain region spans residues 1157–1257 (SRDLQAVLKE…LTGPRIEAQT (101 aa)). The segment at 1224–1257 (PYEEDSPSPGLCDTSEAKEEEGEQLTGPRIEAQT) is disordered.

In terms of assembly, homodimer. Component of the circadian core oscillator, which includes the CRY proteins, CLOCK or NPAS2, BMAL1 or BMAL2, CSNK1D and/or CSNK1E, TIMELESS, and the PER proteins. Interacts with CLOCK-BMAL1 (off DNA). Interacts with BMAL2. Interacts directly with PER1 and PER3, and through a C-terminal domain, with CRY1 and CRY2. Interacts (via PAS 2 domain) with TIMELESS. Interacts with NFIL3. Different large complexes have been identified with different repressive functions. The core of PER complexes is composed of at least PER1, PER2, PER3, CRY1, CRY2, CSNK1D and/or CSNK1E. The large PER complex involved in the repression of transcriptional termination is composed of at least PER2, CDK9, DDX5, DHX9, NCBP1 and POLR2A (active). The large PER complex involved in the histone deacetylation is composed of at least HDAC1, PER2, SFPQ and SIN3A. The large PER complex involved in the histone methylation is composed of at least PER2, CBX3, TRIM28, SUV39H1 and/or SUV39H2; CBX3 mediates the formation of the complex. Interacts with SETX; the interaction inhibits termination of circadian target genes. Interacts with the nuclear receptors HNF4A, NR1D1, NR4A2, RORA, PPARA, PPARG and THRA; the interaction with at least PPARG is ligand dependent. Interacts with PML. Interacts (phosphorylated) with BTRC and FBXW11; the interactions trigger proteasomal degradation. Interacts with NONO and SFPQ. Interacts with CAVIN3. Interacts with MAGEL2. Interacts with MAP1LC3B. Interacts with HNF4A. Post-translationally, acetylated. Deacetylated by SIRT1, resulting in decreased protein stability. Deacetylated by SIRT6, preventing its degradation by the proteasome, resulting in increased protein stability. Phosphorylated by CSNK1E and CSNK1D. Phosphorylation results in PER2 protein degradation. May be dephosphorylated by PP1. In terms of processing, ubiquitinated, leading to its proteasomal degradation. Ubiquitination may be inhibited by CRY1. In the brain, high expression in SCN during the subjective day. Constitutive expression in the cornu ammonis and in the dentate gyrus of the hippocampus. Also expressed in the piriform cortex and the glomeruli of the olfactory bulb, and at a lower extent in the cerebral cortex. Not expressed in the pars tuberalis and the Purkinje neurons. Also expressed in adipose tissue (white and brown), heart, kidney, bladder, lumbar spinal cord, skeletal muscle, spleen, lung, pancreas and liver with highest levels in skeletal muscle and liver and lowest levels in spleen.

It localises to the nucleus. It is found in the cytoplasm. Its subcellular location is the perinuclear region. In terms of biological role, transcriptional repressor which forms a core component of the circadian clock. The circadian clock, an internal time-keeping system, regulates various physiological processes through the generation of approximately 24 hour circadian rhythms in gene expression, which are translated into rhythms in metabolism and behavior. It is derived from the Latin roots 'circa' (about) and 'diem' (day) and acts as an important regulator of a wide array of physiological functions including metabolism, sleep, body temperature, blood pressure, endocrine, immune, cardiovascular, and renal function. Consists of two major components: the central clock, residing in the suprachiasmatic nucleus (SCN) of the brain, and the peripheral clocks that are present in nearly every tissue and organ system. Both the central and peripheral clocks can be reset by environmental cues, also known as Zeitgebers (German for 'timegivers'). The predominant Zeitgeber for the central clock is light, which is sensed by retina and signals directly to the SCN. The central clock entrains the peripheral clocks through neuronal and hormonal signals, body temperature and feeding-related cues, aligning all clocks with the external light/dark cycle. Circadian rhythms allow an organism to achieve temporal homeostasis with its environment at the molecular level by regulating gene expression to create a peak of protein expression once every 24 hours to control when a particular physiological process is most active with respect to the solar day. Transcription and translation of core clock components (CLOCK, NPAS2, BMAL1, BMAL2, PER1, PER2, PER3, CRY1 and CRY2) plays a critical role in rhythm generation, whereas delays imposed by post-translational modifications (PTMs) are important for determining the period (tau) of the rhythms (tau refers to the period of a rhythm and is the length, in time, of one complete cycle). A diurnal rhythm is synchronized with the day/night cycle, while the ultradian and infradian rhythms have a period shorter and longer than 24 hours, respectively. Disruptions in the circadian rhythms contribute to the pathology of cardiovascular diseases, cancer, metabolic syndrome and aging. A transcription/translation feedback loop (TTFL) forms the core of the molecular circadian clock mechanism. Transcription factors, CLOCK or NPAS2 and BMAL1 or BMAL2, form the positive limb of the feedback loop, act in the form of a heterodimer and activate the transcription of core clock genes and clock-controlled genes (involved in key metabolic processes), harboring E-box elements (5'-CACGTG-3') within their promoters. The core clock genes: PER1/2/3 and CRY1/2 which are transcriptional repressors form the negative limb of the feedback loop and interact with the CLOCK|NPAS2-BMAL1|BMAL2 heterodimer inhibiting its activity and thereby negatively regulating their own expression. This heterodimer also activates nuclear receptors NR1D1/2 and RORA/B/G, which form a second feedback loop and which activate and repress BMAL1 transcription, respectively. PER1 and PER2 proteins transport CRY1 and CRY2 into the nucleus with appropriate circadian timing, but also contribute directly to repression of clock-controlled target genes through interaction with several classes of RNA-binding proteins, helicases and others transcriptional repressors. PER appears to regulate circadian control of transcription by at least three different modes. First, interacts directly with the CLOCK-BMAL1 at the tail end of the nascent transcript peak to recruit complexes containing the SIN3-HDAC that remodel chromatin to repress transcription. Second, brings H3K9 methyltransferases such as SUV39H1 and SUV39H2 to the E-box elements of the circadian target genes, like PER2 itself or PER1. The recruitment of each repressive modifier to the DNA seems to be very precisely temporally orchestrated by the large PER complex, the deacetylases acting before than the methyltransferases. Additionally, large PER complexes are also recruited to the target genes 3' termination site through interactions with RNA-binding proteins and helicases that may play a role in transcription termination to regulate transcription independently of CLOCK-BMAL1 interactions. Recruitment of large PER complexes to the elongating polymerase at PER and CRY termination sites inhibited SETX action, impeding RNA polymerase II release and thereby repressing transcriptional reinitiation. May propagate clock information to metabolic pathways via the interaction with nuclear receptors. Coactivator of PPARA and corepressor of NR1D1, binds rhythmically at the promoter of nuclear receptors target genes like BMAL1 or G6PC1. Directly and specifically represses PPARG proadipogenic activity by blocking PPARG recruitment to target promoters and thereby transcriptional activation. Required for fatty acid and lipid metabolism, is involved as well in the regulation of circulating insulin levels. Plays an important role in the maintenance of cardiovascular functions through the regulation of NO and vasodilatatory prostaglandins production in aortas. Controls circadian glutamate uptake in synaptic vesicles through the regulation of VGLUT1 expression. May also be involved in the regulation of inflammatory processes. Represses the CLOCK-BMAL1 induced transcription of BHLHE40/DEC1 and ATF4. Negatively regulates the formation of the TIMELESS-CRY1 complex by competing with TIMELESS for binding to CRY1. This is Period circadian protein homolog 2 (Per2) from Mus musculus (Mouse).